A 908-amino-acid chain; its full sequence is Transcriptional repressor ILP1 (908 aa).

Disordered regions lie at residues 1–113 (MGSN…PQAG) and 238–277 (VGPR…EEDK). Low complexity predominate over residues 25 to 47 (ATPSSKPTSTLSSSKPKTLSASA). The stretch at 426–453 (MQNKGSLIEEIEDQMKELNEKHALSILE) forms a coiled coil. Residues 513 to 530 (EFGRDENLQKRREVEQRA) are compositionally biased toward basic and acidic residues. Residues 513-574 (EFGRDENLQK…ESDTETSAYK (62 aa)) form a disordered region.

It belongs to the GCF family. In terms of assembly, interacts with STIPL1/NTR1.

The protein resides in the nucleus. Transcriptional repressor regulating endoreduplication through control of A-type cyclins expression. Does not bind to promoter sequences (in vitro) and may act by interacting with tissue-specific transcription factors. Enhances the endocycle in endoreduplicating cells in seedlings. Required for efficient splicing. This is Transcriptional repressor ILP1 from Arabidopsis thaliana (Mouse-ear cress).